A 175-amino-acid chain; its full sequence is MASRKAGTRSKAAATKQAQRGSSNVFSMFEQAQIQEFKEAFSCIDQNRDGIICKSDLRETYSQLGKVNVPEEELDAMLQEGKGPINFTVFLTLFGEKLNGTDPEEAILSAFRLFDPSGKGVVNKDQFKQLLLTQADKFSPAEVEQMFALTPMDLAGNIDYKSLCYIITHGDEKEE.

At A2 the chain carries N-acetylalanine. S22 and S23 each carry phosphoserine. EF-hand domains are found at residues 32–67 (AQIQEFKEAFSCIDQNRDGIICKSDLRETYSQLGKV), 102–137 (DPEEAILSAFRLFDPSGKGVVNKDQFKQLLLTQADK), and 138–173 (FSPAEVEQMFALTPMDLAGNIDYKSLCYIITHGDEK). Residues D45, N47, D49, and D56 each contribute to the Ca(2+) site.

In terms of assembly, myosin is a hexamer of 2 heavy chains and 4 light chains.

The chain is Myosin regulatory light chain 2, atrial isoform (MYL7) from Sus scrofa (Pig).